Consider the following 512-residue polypeptide: Beta-glucosidase 44 (512 aa).

An N-terminal signal peptide occupies residues 1–23 (MRHLSSPPWPLLLLLLLSSFTSG). A beta-D-glucoside is bound at residue Q58. A glycan (N-linked (GlcNAc...) asparagine) is linked at N86. Residues H159 and 204-205 (NE) each bind a beta-D-glucoside. The active-site Proton donor is the E205. C224 and C231 are oxidised to a cystine. A glycan (N-linked (GlcNAc...) asparagine) is linked at N230. A beta-D-glucoside is bound by residues Y347 and E419. The active-site Nucleophile is the E419. N427 carries N-linked (GlcNAc...) asparagine glycosylation. Residues W466, 473 to 474 (EW), and F482 contribute to the a beta-D-glucoside site.

Belongs to the glycosyl hydrolase 1 family. Homodimer.

Its subcellular location is the secreted. The enzyme catalyses Hydrolysis of terminal, non-reducing beta-D-glucosyl residues with release of beta-D-glucose.. In terms of biological role, hydrolyzes p-nitrophenyl beta-D-glucoside, p-nitrophenyl beta-D-mannoside, cellobiose, 4-methylumbelliferyl-beta-D-glucoside, laminarin, amygdalin, esculin and gentiobiose. In Arabidopsis thaliana (Mouse-ear cress), this protein is Beta-glucosidase 44.